A 128-amino-acid polypeptide reads, in one-letter code: Large ribosomal subunit protein bL17 (128 aa).

This sequence belongs to the bacterial ribosomal protein bL17 family. In terms of assembly, part of the 50S ribosomal subunit. Contacts protein L32.

This Glaesserella parasuis serovar 5 (strain SH0165) (Haemophilus parasuis) protein is Large ribosomal subunit protein bL17.